We begin with the raw amino-acid sequence, 478 residues long: Argininosuccinate lyase (478 aa).

This sequence belongs to the lyase 1 family. Argininosuccinate lyase subfamily.

Its subcellular location is the cytoplasm. It catalyses the reaction 2-(N(omega)-L-arginino)succinate = fumarate + L-arginine. It functions in the pathway amino-acid biosynthesis; L-arginine biosynthesis; L-arginine from L-ornithine and carbamoyl phosphate: step 3/3. The protein is Argininosuccinate lyase of Leptospira biflexa serovar Patoc (strain Patoc 1 / Ames).